A 1421-amino-acid polypeptide reads, in one-letter code: ALK tyrosine kinase receptor homolog scd-2 (1421 aa).

Residues 1 to 20 form the signal peptide; the sequence is MRKRRLWWFVVLFRVTLVGA. Topologically, residues 21 to 903 are extracellular; it reads ILPNETFDVR…DTCEEIQIWT (883 aa). 6 N-linked (GlcNAc...) asparagine glycosylation sites follow: N24, N44, N70, N83, N119, and N201. The 39-residue stretch at 300 to 338 folds into the LDL-receptor class A domain; that stretch reads QCSRGDQFLCSISANTRCLQNAQCDSRIDCDDESDEMDC. Intrachain disulfides connect C301–C317, C309–C329, and C323–C338. Positions 339–542 constitute an MAM domain; the sequence is GNINGTMCDF…NLSFSPTCFE (204 aa). Residues N342, N362, N495, N533, N546, N633, N726, N793, N849, N873, and N893 are each glycosylated (N-linked (GlcNAc...) asparagine). Residues 904–924 traverse the membrane as a helical segment; it reads LYNITFLIFAALTIIGALFVV. Residues 925–1421 are Cytoplasmic-facing; the sequence is YHYRNREKQM…SVPLLECQTR (497 aa). The 286-residue stretch at 976–1261 folds into the Protein kinase domain; the sequence is IERGRVLGRG…GMPFPIHPAV (286 aa). Residues 982–990 and K1003 each bind ATP; that span reads LGRGNFGEV. The active-site Proton acceptor is the D1106.

The protein belongs to the protein kinase superfamily. Tyr protein kinase family. Insulin receptor subfamily. Interacts (via cytoplasmic domain) with fsn-1 (via SPRY domain). Expressed in AIA sensory neurons.

Its subcellular location is the cell membrane. It catalyses the reaction L-tyrosyl-[protein] + ATP = O-phospho-L-tyrosyl-[protein] + ADP + H(+). In terms of biological role, probable tyrosine-protein kinase receptor which regulates the dauer/non-dauer developmental decision probably by controlling daf-3 transcriptional activity in parallel or together with the TGF-beta pathway. Regulates integration of conflicting sensory cues in AIA interneurons. May act as a receptor for hen-1. In AWA neurons, together with hen-1, plays a role in regulating olfactory adaptation by controlling the forgetting sensory responses to odorants such as diacetyl. This chain is ALK tyrosine kinase receptor homolog scd-2, found in Caenorhabditis elegans.